The following is a 928-amino-acid chain: cGMP-dependent 3',5'-cyclic phosphodiesterase (928 aa).

Ser-109 carries the phosphoserine modification. The disordered stretch occupies residues 188–210 (RRPEAVQNTSADPSEDQKDEKGY). 2 GAF domains span residues 228–365 (DATS…GTVL) and 397–536 (DVSV…GISI). Residues Ser-419, Asp-434, Ile-453, Tyr-476, and Thr-487 each contribute to the 3',5'-cyclic GMP site. Residues 566 to 890 (SDDEYTKLLH…EHWTKVSHKF (325 aa)) enclose the PDEase domain. Catalysis depends on His-644, which acts as the Proton donor. His-648, His-684, Asp-685, and Asp-796 together coordinate Zn(2+). Asp-685 is a binding site for Mg(2+).

Belongs to the cyclic nucleotide phosphodiesterase family. PDE2 subfamily. As to quaternary structure, homodimer. Requires Zn(2+) as cofactor. Mg(2+) is required as a cofactor. Expressed in brain and liver.

It is found in the cell membrane. It localises to the cytoplasm. Its subcellular location is the mitochondrion matrix. The protein localises to the mitochondrion inner membrane. The protein resides in the mitochondrion outer membrane. It carries out the reaction a nucleoside 3',5'-cyclic phosphate + H2O = a nucleoside 5'-phosphate + H(+). The enzyme catalyses 3',5'-cyclic GMP + H2O = GMP + H(+). It catalyses the reaction 3',5'-cyclic AMP + H2O = AMP + H(+). With respect to regulation, the 3',5'-cyclic-AMP phosphodiesterase activity is stimulated by 3',5'-cyclic GMP. Specifically inhibited by Bay 60-7550. When repressed, protected from ionomycin- but not staurosporin-induced cell death. Functionally, cGMP-activated cyclic nucleotide phosphodiesterase with a dual-specificity for the second messengers cAMP and cGMP, which are key regulators of many important physiological processes. Has a higher efficiency with cGMP compared to cAMP. Plays a role in cell growth and migration. In terms of biological role, regulates mitochondrial cAMP levels and respiration. Involved in the regulation of mitochondria morphology/dynamics and apoptotic cell death via local modulation of cAMP/PKA signaling in the mitochondrion, including the monitoring of local cAMP levels at the outer mitochondrial membrane and of PKA-dependent phosphorylation of Dnm1l. The protein is cGMP-dependent 3',5'-cyclic phosphodiesterase of Rattus norvegicus (Rat).